The primary structure comprises 441 residues: Coiled-coil domain-containing protein 91 (441 aa).

The segment at 1 to 16 is GGA1-binding motif; sequence MDDDDFGGFEAAETFD. Positions 1–26 are disordered; the sequence is MDDDDFGGFEAAETFDGGSGETQTTS. 2 positions are modified to phosphoserine: S43 and S46. 2 coiled-coil regions span residues 130–209 and 249–407; these read SNIQ…GHEA and ELLN…KRLD. Residues 210 to 413 are homodimerization; sequence LSIIVDEYKA…KRLDQVIRQR (204 aa).

In terms of assembly, homodimer. Interacts with GGA1, GGA2 and AP1G1. In terms of tissue distribution, widely expressed.

The protein resides in the membrane. The protein localises to the golgi apparatus. Its subcellular location is the trans-Golgi network membrane. It localises to the trans-Golgi network. Functionally, involved in the regulation of membrane traffic through the trans-Golgi network (TGN). Functions in close cooperation with the GGAs in the sorting of hydrolases to lysosomes. This chain is Coiled-coil domain-containing protein 91 (CCDC91), found in Homo sapiens (Human).